The sequence spans 1106 residues: GYF domain-containing protein gyf-1 (1106 aa).

Positions 1-17 (MSSVSSAEPTAQQNFNP) are enriched in polar residues. 3 disordered regions span residues 1–50 (MSSV…GGFD), 160–370 (GALQ…DSTV), and 383–434 (KAST…SAWS). Positions 30–42 (RGGSISSGNNRSS) are enriched in low complexity. Positions 162–180 (LQNGQSPTSRWAPKSSWNK) are enriched in polar residues. Over residues 207–224 (GRGGGRIGGENGFGGATN) the composition is skewed to gly residues. Polar residues predominate over residues 229–243 (AAQNEDSPGTYQSKF). A compositionally biased stretch (gly residues) spans 248-261 (RGGGAGSVGRGGST). Positions 306-322 (VGSTSRTSTNAAPQSSE) are enriched in polar residues. 2 stretches are compositionally biased toward low complexity: residues 334-353 (QRTQ…QQAQ) and 390-410 (PPQQ…APSR). In terms of domain architecture, GYF spans 459–508 (PVQFYYMDPTETRRGPFPKDQMNVWFKAGYFTDESLRVQRGENGEYKTIG). Residues 584–746 (LDDHNRRLAE…ERKRAAERER (163 aa)) adopt a coiled-coil conformation. Disordered regions lie at residues 778-811 (AFTG…KTAP), 909-928 (KNSQ…SAKV), 1026-1076 (AGGR…DGNI), and 1087-1106 (RLNK…PSRR). Positions 786–801 (VSPSGSEESDEWISTS) are enriched in polar residues. Residues 1046–1057 (SDSNSGSNSNSG) show a composition bias toward low complexity.

This chain is GYF domain-containing protein gyf-1, found in Caenorhabditis elegans.